Here is a 3072-residue protein sequence, read N- to C-terminus: Eukaryotic translation initiation factor 2-alpha kinase PK4 (3072 aa).

The Cytoplasmic portion of the chain corresponds to 1-106; it reads MCNFIKKGIR…EFRWLINKLE (106 aa). The helical transmembrane segment at 107 to 127 threads the bilayer; it reads IIYFYFFCHLLLLCIFQNIFL. The Lumenal segment spans residues 128 to 1643; the sequence is LTYMSKEYFL…FTSIRYKRRR (1516 aa). The segment at 383-402 is disordered; the sequence is KEKCHRDEKCDRGENYDRGE. Positions 576 to 610 are 10 X 7 AA tandem repeat of D-K-N-[GE]-L-D-[GD]; sequence KKKILDENDMITIDNNIDKKENILFPYFHMEILKD. Positions 970–1010 are disordered; that stretch reads QYEDNNDNDNNKNDNNKNDNNKNDNNKNDNNNNNNNNNNNS. Basic and acidic residues predominate over residues 978 to 996; the sequence is DNNKNDNNKNDNNKNDNNK. Over residues 997-1009 the composition is skewed to low complexity; it reads NDNNNNNNNNNNN. Residues 1644–1664 traverse the membrane as a helical segment; it reads WYWRVFYTIMFIIFFPVLFIY. The Cytoplasmic portion of the chain corresponds to 1665–3072; it reads RRIIKRRKGS…IKNENNGADK (1408 aa). Disordered regions lie at residues 1737–1766 and 1917–1937; these read KNYN…SKSN and KVGS…KDKK. The span at 1738–1766 shows a compositional bias: low complexity; the sequence is NYNNNNNNNNNKNNNNISNNNSNSNSKSN. The segment covering 1928–1937 has biased composition (basic and acidic residues); that stretch reads NYTDNEKDKK. ATP-binding positions include 2152-2160 and K2177; that span reads IGQGGFGSV. Disordered stretches follow at residues 2316–2402, 2479–2558, and 2691–2749; these read FYSD…EGRD, RNED…KKLD, and ENDD…DDDI. Basic and acidic residues predominate over residues 2326 to 2335; it reads KNKENPEKNH. A compositionally biased stretch (basic residues) spans 2362–2384; that stretch reads HKLKKRKNKKKKSKKKRKSKSKI. Repeat copies occupy residues 2483-2489, 2490-2496, 2497-2503, 2504-2510, 2511-2517, 2518-2524, 2525-2531, 2532-2538, 2539-2545, and 2546-2552. Positions 2627-2998 constitute a Protein kinase domain; the sequence is TNVESINTNG…KIKVLLDPHL (372 aa). Positions 2692–2702 are enriched in acidic residues; it reads NDDDDDDDDDN. Catalysis depends on D2835, which acts as the Proton acceptor. T2902 carries the post-translational modification Phosphothreonine.

The protein belongs to the protein kinase superfamily. Ser/Thr protein kinase family. GCN2 subfamily. In terms of assembly, may form oligomers in response to stress; oligomerization may result in catalytic activity. Interacts with BIP; the interaction is disrupted in response to stress. In terms of processing, auto-phosphorylated.

The protein resides in the endoplasmic reticulum membrane. It carries out the reaction L-seryl-[protein] + ATP = O-phospho-L-seryl-[protein] + ADP + H(+). The enzyme catalyses L-threonyl-[protein] + ATP = O-phospho-L-threonyl-[protein] + ADP + H(+). With respect to regulation, dissociation from BIP and oligomerization, may results autophosphorylation and kinase activity induction. In terms of biological role, during the asexual blood stage, phosphorylates translation factor eIF2alpha in late schizonts resulting in protein translation inhibition. Plays a role in trophozoite differentiation into schizonts. This Plasmodium falciparum (isolate 3D7) protein is Eukaryotic translation initiation factor 2-alpha kinase PK4.